We begin with the raw amino-acid sequence, 454 residues long: Allantoinase (454 aa).

Zn(2+) is bound by residues His-60, His-62, Lys-147, His-183, His-239, and Asp-312. An N6-carboxylysine modification is found at Lys-147.

The protein belongs to the metallo-dependent hydrolases superfamily. Allantoinase family. As to quaternary structure, homotetramer. Requires Zn(2+) as cofactor. Post-translationally, carboxylation allows a single lysine to coordinate two zinc ions.

It catalyses the reaction (S)-allantoin + H2O = allantoate + H(+). It participates in nitrogen metabolism; (S)-allantoin degradation; allantoate from (S)-allantoin: step 1/1. Functionally, catalyzes the conversion of allantoin (5-ureidohydantoin) to allantoic acid by hydrolytic cleavage of the five-member hydantoin ring. This Rubrobacter xylanophilus (strain DSM 9941 / JCM 11954 / NBRC 16129 / PRD-1) protein is Allantoinase.